We begin with the raw amino-acid sequence, 113 residues long: MAKIKKDDLVQVISGKDKGKQGKVLRVFPTDERVLVEGVNRVTKHLRAGQDNNGSTEGGLQVVEAPIHISNVAVVDPETKKPTRVGYRFETVEKDGVTKTVKVRFAKASGKEL.

The protein belongs to the universal ribosomal protein uL24 family. Part of the 50S ribosomal subunit.

Its function is as follows. One of two assembly initiator proteins, it binds directly to the 5'-end of the 23S rRNA, where it nucleates assembly of the 50S subunit. In terms of biological role, one of the proteins that surrounds the polypeptide exit tunnel on the outside of the subunit. The polypeptide is Large ribosomal subunit protein uL24 (Micrococcus luteus (Micrococcus lysodeikticus)).